The chain runs to 211 residues: Adenylate kinase (211 aa).

13-18 (GAGKGT) is an ATP binding site. The segment at 33–62 (STGDILRVAVANKTKLGLEAKKFMDAGQLV) is NMP. Residues threonine 34, arginine 39, 60 to 62 (QLV), 88 to 91 (GFPR), and glutamine 95 each bind AMP. The segment at 129–161 (GRRTSKVTGKIYHIKFNPPVDEKPEDLVQRADD) is LID. ATP-binding positions include arginine 130 and 139-140 (IY). AMP is bound by residues arginine 158 and arginine 169. Position 197 (lysine 197) interacts with ATP.

Belongs to the adenylate kinase family. Monomer.

The protein resides in the cytoplasm. It carries out the reaction AMP + ATP = 2 ADP. It participates in purine metabolism; AMP biosynthesis via salvage pathway; AMP from ADP: step 1/1. In terms of biological role, catalyzes the reversible transfer of the terminal phosphate group between ATP and AMP. Plays an important role in cellular energy homeostasis and in adenine nucleotide metabolism. This Fusobacterium nucleatum subsp. nucleatum (strain ATCC 25586 / DSM 15643 / BCRC 10681 / CIP 101130 / JCM 8532 / KCTC 2640 / LMG 13131 / VPI 4355) protein is Adenylate kinase.